Reading from the N-terminus, the 540-residue chain is Chaperonin GroEL 1 (540 aa).

Residues 29–32 (TLGP), 86–90 (DGTTT), Gly413, 478–480 (NAA), and Asp494 contribute to the ATP site.

Belongs to the chaperonin (HSP60) family. Forms a cylinder of 14 subunits composed of two heptameric rings stacked back-to-back. Interacts with the co-chaperonin GroES.

The protein localises to the cytoplasm. The catalysed reaction is ATP + H2O + a folded polypeptide = ADP + phosphate + an unfolded polypeptide.. In terms of biological role, together with its co-chaperonin GroES, plays an essential role in assisting protein folding. The GroEL-GroES system forms a nano-cage that allows encapsulation of the non-native substrate proteins and provides a physical environment optimized to promote and accelerate protein folding. The polypeptide is Chaperonin GroEL 1 (Mycobacterium sp. (strain JLS)).